The following is a 122-amino-acid chain: Protein TCL1B3 (122 aa).

Belongs to the TCL1 family.

This is Protein TCL1B3 (Tcl1b3) from Mus musculus (Mouse).